We begin with the raw amino-acid sequence, 128 residues long: Ribonuclease pancreatic (128 aa).

Residues 1-25 are disordered; sequence KESSAKKFQRQHIDSSGSPSTNPNY. Substrate contacts are provided by K7 and R10. Catalysis depends on H12, which acts as the Proton acceptor. A compositionally biased stretch (polar residues) spans 14–25; it reads DSSGSPSTNPNY. Cystine bridges form between C26–C84, C40–C95, C58–C110, and C65–C72. N34 is a glycosylation site (N-linked (GlcNAc...) asparagine). Residues 41–45, K66, and R85 each bind substrate; that span reads KPVNT. The Proton donor role is filled by H119.

Belongs to the pancreatic ribonuclease family. Monomer. Interacts with and forms tight 1:1 complexes with RNH1. Dimerization of two such complexes may occur. Interaction with RNH1 inhibits this protein. As to expression, pancreas.

The protein resides in the secreted. The catalysed reaction is an [RNA] containing cytidine + H2O = an [RNA]-3'-cytidine-3'-phosphate + a 5'-hydroxy-ribonucleotide-3'-[RNA].. It carries out the reaction an [RNA] containing uridine + H2O = an [RNA]-3'-uridine-3'-phosphate + a 5'-hydroxy-ribonucleotide-3'-[RNA].. Functionally, endonuclease that catalyzes the cleavage of RNA on the 3' side of pyrimidine nucleotides. Acts on single-stranded and double-stranded RNA. This is Ribonuclease pancreatic (RNASE1) from Proechimys guairae (Guaira spiny rat).